The following is a 596-amino-acid chain: 3-hydroxy-3-methylglutaryl-coenzyme A reductase 1 (596 aa).

Residues 1 to 29 (MDVRRRPVKPLYTSKDASAGEPLKQQEVS) form a disordered region. 2 helical membrane-spanning segments follow: residues 41 to 61 (LYLTNGLFFTMFFSVMYFLLV) and 83 to 103 (AMVSLIASVIYLLGFFGIGFV). The segment at 104 to 183 (QSFVSRSNSD…SPIIMPALSE (80 aa)) is linker. Residues 184-596 (DDEEIIQSVV…YNRSIKDISK (413 aa)) are catalytic. Glutamate 278 functions as the Charge relay system in the catalytic mechanism. The N-linked (GlcNAc...) asparagine glycan is linked to asparagine 342. The active-site Charge relay system is the lysine 410. The N-linked (GlcNAc...) asparagine glycan is linked to asparagine 455. Aspartate 486 serves as the catalytic Charge relay system. The Proton donor role is filled by histidine 584. A glycan (N-linked (GlcNAc...) asparagine) is linked at asparagine 588.

This sequence belongs to the HMG-CoA reductase family. As to expression, expressed in flower primordia and anthers.

Its subcellular location is the endoplasmic reticulum membrane. It catalyses the reaction (R)-mevalonate + 2 NADP(+) + CoA = (3S)-3-hydroxy-3-methylglutaryl-CoA + 2 NADPH + 2 H(+). It functions in the pathway metabolic intermediate biosynthesis; (R)-mevalonate biosynthesis; (R)-mevalonate from acetyl-CoA: step 3/3. In terms of biological role, catalyzes the synthesis of mevalonate. The specific precursor of all isoprenoid compounds present in plants. The sequence is that of 3-hydroxy-3-methylglutaryl-coenzyme A reductase 1 (HMG1) from Solanum tuberosum (Potato).